A 465-amino-acid polypeptide reads, in one-letter code: Cysteine--tRNA ligase (465 aa).

Residue Cys-27 participates in Zn(2+) binding. The short motif at 29-39 (PTVYNFFHIGN) is the 'HIGH' region element. Residues Cys-207, His-232, and Glu-236 each contribute to the Zn(2+) site. The 'KMSKS' region motif lies at 264–268 (KMSKS). Residue Lys-267 coordinates ATP.

This sequence belongs to the class-I aminoacyl-tRNA synthetase family. Monomer. Zn(2+) is required as a cofactor.

Its subcellular location is the cytoplasm. It catalyses the reaction tRNA(Cys) + L-cysteine + ATP = L-cysteinyl-tRNA(Cys) + AMP + diphosphate. The protein is Cysteine--tRNA ligase of Clostridium botulinum (strain ATCC 19397 / Type A).